A 438-amino-acid chain; its full sequence is Gamma-glutamyl phosphate reductase (438 aa).

Residues 1–21 are disordered; that stretch reads MTAQTSSDVTDQKTDLTRESE. The segment covering 10–21 has biased composition (basic and acidic residues); sequence TDQKTDLTRESE.

Belongs to the gamma-glutamyl phosphate reductase family.

The protein resides in the cytoplasm. It catalyses the reaction L-glutamate 5-semialdehyde + phosphate + NADP(+) = L-glutamyl 5-phosphate + NADPH + H(+). It participates in amino-acid biosynthesis; L-proline biosynthesis; L-glutamate 5-semialdehyde from L-glutamate: step 2/2. Functionally, catalyzes the NADPH-dependent reduction of L-glutamate 5-phosphate into L-glutamate 5-semialdehyde and phosphate. The product spontaneously undergoes cyclization to form 1-pyrroline-5-carboxylate. The sequence is that of Gamma-glutamyl phosphate reductase from Corynebacterium efficiens (strain DSM 44549 / YS-314 / AJ 12310 / JCM 11189 / NBRC 100395).